Reading from the N-terminus, the 223-residue chain is UPF0502 protein Sde_2426 (223 aa).

The protein belongs to the UPF0502 family.

The protein is UPF0502 protein Sde_2426 of Saccharophagus degradans (strain 2-40 / ATCC 43961 / DSM 17024).